We begin with the raw amino-acid sequence, 338 residues long: Ferrochelatase (338 aa).

The Fe cation site is built by His189 and Glu294.

This sequence belongs to the ferrochelatase family.

It is found in the cytoplasm. The catalysed reaction is heme b + 2 H(+) = protoporphyrin IX + Fe(2+). It participates in porphyrin-containing compound metabolism; protoheme biosynthesis; protoheme from protoporphyrin-IX: step 1/1. Functionally, catalyzes the ferrous insertion into protoporphyrin IX. The chain is Ferrochelatase from Pseudomonas putida (strain ATCC 700007 / DSM 6899 / JCM 31910 / BCRC 17059 / LMG 24140 / F1).